Here is a 79-residue protein sequence, read N- to C-terminus: Reactive oxygen species modulator 1 (79 aa).

The helical transmembrane segment at 23 to 43 (FMMGFAVGMAAGALFGTFSCL) threads the bilayer. A sufficient for antibacterial activity region spans residues 42-60 (CLRFGMRGRELMGGVGKTM).

This sequence belongs to the MGR2 family.

The protein localises to the mitochondrion inner membrane. In terms of biological role, has antibacterial activity against a variety of bacteria including S.aureus, P.aeruginosa and M.tuberculosis. Acts by inducing bacterial membrane breakage. Functionally, induces production of reactive oxygen species (ROS) which are necessary for cell proliferation. May play a role in inducing oxidative DNA damage and replicative senescence. May play a role in the coordination of mitochondrial morphology and cell proliferation. The chain is Reactive oxygen species modulator 1 (romo1) from Xenopus tropicalis (Western clawed frog).